A 989-amino-acid polypeptide reads, in one-letter code: Autotransporter adhesin/invasin TibA (989 aa).

The signal sequence occupies residues 1 to 54; the sequence is MNKVYNTVWNESTGTWVVTSELTRKGGLRPRQIKRTVLAGLIAGLLMPSMPALA. O-alpha-linked (D-glycero-D-manno-heptose) serine glycosylation is found at Ser74, Ser86, Ser93, Ser94, Ser97, Ser100, Ser112, Ser113, Ser116, Ser119, Ser124, Ser131, Ser132, and Ser135. 12 repeat units span residues 82-100, 101-119, 120-138, 139-157, 158-176, 177-195, 196-214, 215-233, 234-251, 252-270, 271-289, and 290-308. The segment at 82 to 308 is 12 X 19 AA approximate repeats; it reads TTINSGGKQY…QVEAGGSASK (227 aa). A compositionally biased stretch (polar residues) spans 110–123; that stretch reads HVSSGGSATSSTIN. The segment at 110–146 is disordered; that stretch reads HVSSGGSATSSTINSGGHQHVSSGGSATNTTVNNGGR. The segment covering 124 to 135 has biased composition (low complexity); it reads SGGHQHVSSGGS. The span at 136-146 shows a compositional bias: polar residues; it reads ATNTTVNNGGR. Ser151, Ser154, Ser162, Ser170, Ser176, Ser181, Ser188, Ser189, Ser200, Ser226, Ser227, Ser230, Ser238, Ser248, Ser263, Ser264, Ser275, Ser294, Ser305, Ser313, and Ser322 each carry an O-alpha-linked (D-glycero-D-manno-heptose) serine glycan. The segment at 623–686 is disordered; that stretch reads WYLKADTPPP…GTSSSPVRRT (64 aa). A compositionally biased stretch (pro residues) spans 629-638; the sequence is TPPPVTPPTN. 8 tandem repeats follow at residues 639 to 643, 644 to 648, 649 to 653, 654 to 658, 659 to 663, 664 to 668, 669 to 673, and 674 to 678. Over residues 639–667 the composition is skewed to low complexity; that stretch reads PDADNPDAGNPDAGNPDAGNPDAGNPDAG. An 8 X 5 AA repeats of P-[DG]-[AGT]-[DGA]-[NKT] region spans residues 639–678; the sequence is PDADNPDAGNPDAGNPDAGNPDAGNPDAGKPGTGKPDAGT. The Autotransporter domain maps to 721–989; the sequence is NTRAPGGVWG…TGGVGFRINF (269 aa).

In terms of assembly, homohexamer. Glycosylated by TibC. Glycosylation is required for adhesion to and invasion of host cells. Glycosylation is dispensable for bacterial autoaggregation and biofilm formation.

It is found in the cell outer membrane. Functionally, mediates both adhesion to and invasion of human intestine epithelial cells. Also mediates bacterial cell aggregation via intercellular TibA-TibA interaction. Enhances biofilm formation. This is Autotransporter adhesin/invasin TibA from Escherichia coli O78:H11 (strain H10407 / ETEC).